A 707-amino-acid polypeptide reads, in one-letter code: MKDAPLQIHVLLGLAITALVQAGDKKVDCPQLCTCEIRPWFTPRSIYMEASTVDCNDLGLLNFPARLPADTQILLLQTNNIARIEHSTDFPVNLTGLDLSQNNLSSVTNINVQKMSQLLSVYLEENKLTELPEKCLYGLSNLQELYVNHNLLSAISPGAFVGLHNLLRLHLNSNRLQMINSKWFEALPNLEILMLGDNPILRIKDMNFQPLLKLRSLVIAGINLTEVPDDALVGLENLESISFYDNRLNKVPQVALQKAVNLKFLDLNKNPINRIRRGDFSNMLHLKELGINNMPELVSIDSLAVDNLPDLRKIEATNNPRLSYIHPNAFFRLPKLESLMLNSNALSALYHGTIESLPNLKEISIHSNPIRCDCVIRWINMNKTNIRFMEPDSLFCVDPPEFQGQNVRQVHFRDMMEICLPLIAPESFPSILDVEADSYVSLHCRATAEPQPEIYWITPSGKRLLPNTLREKFYVHSEGTLDIRGITPKEGGLYTCIATNLVGADLKSIMIKVGGFVPQDNNGSLNIKIRDIRANSVLVSWKANSKILKSSVKWTAFVKTEDSQAAQSARIPSDVKVYNLTHLKPSTEYKICIDIPTIYQKSRKQCVNVTTKSLEHDGKENGKSHTVFVACVGGLLGIIGVMCLFGCVSQEGNCENEHSYTVNHCHKPTLAFSELYPPLINLWESSKEKPASLEVKATAIGVPTSMS.

The first 22 residues, 1–22 (MKDAPLQIHVLLGLAITALVQA), serve as a signal peptide directing secretion. An LRRNT domain is found at 23–69 (GDKKVDCPQLCTCEIRPWFTPRSIYMEASTVDCNDLGLLNFPARLPA). At 23–626 (GDKKVDCPQL…DGKENGKSHT (604 aa)) the chain is on the extracellular side. 12 LRR repeats span residues 70-91 (DTQI…TDFP), 93-114 (NLTG…NVQK), 117-138 (QLLS…CLYG), 141-162 (NLQE…AFVG), 165-186 (NLLR…WFEA), 189-210 (NLEI…NFQP), 213-234 (KLRS…ALVG), 237-258 (NLES…ALQK), 261-282 (NLKF…DFSN), 285-304 (HLKE…DSLA), 310-332 (DLRK…AFFR), and 335-358 (KLES…ESLP). N-linked (GlcNAc...) asparagine glycans are attached at residues asparagine 93 and asparagine 103. N-linked (GlcNAc...) asparagine glycosylation is present at asparagine 223. The region spanning 368 to 421 (NPIRCDCVIRWINMNKTNIRFMEPDSLFCVDPPEFQGQNVRQVHFRDMMEICLP) is the LRRCT domain. N-linked (GlcNAc...) asparagine glycosylation is present at asparagine 382. The Ig-like C2-type domain maps to 421–514 (PLIAPESFPS…DLKSIMIKVG (94 aa)). Residues cysteine 444 and cysteine 496 are joined by a disulfide bond. Asparagine 522, asparagine 579, and asparagine 608 each carry an N-linked (GlcNAc...) asparagine glycan. In terms of domain architecture, Fibronectin type-III spans 523–614 (GSLNIKIRDI…QCVNVTTKSL (92 aa)). The helical transmembrane segment at 627–647 (VFVACVGGLLGIIGVMCLFGC) threads the bilayer. The Cytoplasmic segment spans residues 648-707 (VSQEGNCENEHSYTVNHCHKPTLAFSELYPPLINLWESSKEKPASLEVKATAIGVPTSMS).

It is found in the membrane. In Rattus norvegicus (Rat), this protein is Leucine-rich repeat neuronal protein 3 (Lrrn3).